The following is a 249-amino-acid chain: Solute carrier family 25 member 35 (249 aa).

2 Solcar repeats span residues Met1–Gly90 and Gln152–Val243. The next 4 membrane-spanning stretches (helical) occupy residues Thr38–Gly58, Leu59–Ile79, Trp154–Pro174, and Leu226–Lys249.

Belongs to the mitochondrial carrier (TC 2.A.29) family.

It localises to the mitochondrion inner membrane. It catalyses the reaction a dicarboxylate(in) + sulfate(out) = a dicarboxylate(out) + sulfate(in). Functionally, putative antiporter that exchanges dicarboxylates and sulfur oxoanions across the inner membrane of mitochondria. The protein is Solute carrier family 25 member 35 (SLC25A35) of Bos taurus (Bovine).